Consider the following 151-residue polypeptide: Protein ECM12 (151 aa).

Residue N2 is glycosylated (N-linked (GlcNAc...) asparagine). 2 helical membrane passes run 17-37 (LLVF…IFFF) and 51-71 (AFLA…VGFF). N-linked (GlcNAc...) asparagine glycosylation is found at N132 and N137.

It is found in the membrane. May be involved in cell wall organization and biogenesis. In Saccharomyces cerevisiae (strain ATCC 204508 / S288c) (Baker's yeast), this protein is Protein ECM12 (ECM12).